Consider the following 248-residue polypeptide: tRNA pseudouridine synthase A (248 aa).

The Nucleophile role is filled by aspartate 52. Residue tyrosine 113 participates in substrate binding.

Belongs to the tRNA pseudouridine synthase TruA family. Homodimer.

The catalysed reaction is uridine(38/39/40) in tRNA = pseudouridine(38/39/40) in tRNA. Functionally, formation of pseudouridine at positions 38, 39 and 40 in the anticodon stem and loop of transfer RNAs. This chain is tRNA pseudouridine synthase A, found in Mesorhizobium japonicum (strain LMG 29417 / CECT 9101 / MAFF 303099) (Mesorhizobium loti (strain MAFF 303099)).